Here is a 363-residue protein sequence, read N- to C-terminus: Protein MAK32 (363 aa).

To S.pombe SpAC4G8.14c.

In terms of biological role, necessary for the structural stability of L-A double-stranded RNA-containing particles. Necessary for growth at 37 degrees Celsius as well as for maintenance of the killer plasmid. The polypeptide is Protein MAK32 (MAK32) (Saccharomyces cerevisiae (strain ATCC 204508 / S288c) (Baker's yeast)).